Reading from the N-terminus, the 637-residue chain is Chaperone protein HtpG (637 aa).

Residues 1–328 form an a; substrate-binding region; it reads MADIEELKFD…SSDLPLNISR (328 aa). The segment at 329–556 is b; the sequence is ETLQNNRIVE…DNSMDIRMER (228 aa). Positions 488-508 are disordered; sequence IGASDDSGDKTSEDSGESASD. The span at 494-508 shows a compositional bias: basic and acidic residues; sequence SGDKTSEDSGESASD. The c stretch occupies residues 557–637; the sequence is FLREQKQLNY…GVLAKIFSSK (81 aa).

It belongs to the heat shock protein 90 family. In terms of assembly, homodimer.

Its subcellular location is the cytoplasm. Molecular chaperone. Has ATPase activity. This is Chaperone protein HtpG from Anaplasma phagocytophilum (strain HZ).